A 344-amino-acid chain; its full sequence is Phenylalanine--tRNA ligase alpha subunit (344 aa).

Position 256 (E256) interacts with Mg(2+).

Belongs to the class-II aminoacyl-tRNA synthetase family. Phe-tRNA synthetase alpha subunit type 1 subfamily. In terms of assembly, tetramer of two alpha and two beta subunits. Requires Mg(2+) as cofactor.

Its subcellular location is the cytoplasm. It catalyses the reaction tRNA(Phe) + L-phenylalanine + ATP = L-phenylalanyl-tRNA(Phe) + AMP + diphosphate + H(+). The sequence is that of Phenylalanine--tRNA ligase alpha subunit from Oceanobacillus iheyensis (strain DSM 14371 / CIP 107618 / JCM 11309 / KCTC 3954 / HTE831).